Consider the following 281-residue polypeptide: 2-dehydro-3-deoxyphosphooctonate aldolase 1 (281 aa).

Belongs to the KdsA family.

The protein resides in the cytoplasm. It catalyses the reaction D-arabinose 5-phosphate + phosphoenolpyruvate + H2O = 3-deoxy-alpha-D-manno-2-octulosonate-8-phosphate + phosphate. It participates in carbohydrate biosynthesis; 3-deoxy-D-manno-octulosonate biosynthesis; 3-deoxy-D-manno-octulosonate from D-ribulose 5-phosphate: step 2/3. Its pathway is bacterial outer membrane biogenesis; lipopolysaccharide biosynthesis. This is 2-dehydro-3-deoxyphosphooctonate aldolase 1 (kdsA1) from Pseudomonas putida (strain ATCC 47054 / DSM 6125 / CFBP 8728 / NCIMB 11950 / KT2440).